The sequence spans 741 residues: Hemolysin (741 aa).

The N-terminal stretch at 1 to 25 (MPKLNRCAIAIFTILSAISSPTLLA) is a signal peptide. Residues 26–157 (NINEPSGEAA…RSGFASPAPA (132 aa)) constitute a propeptide that is removed on maturation. 3 disulfides stabilise this stretch: Cys-182–Cys-200, Cys-497–Cys-511, and Cys-537–Cys-549. Residues 484 to 575 (RPVNLQLASF…LTNVYSGESL (92 aa)) enclose the Ricin B-type lectin domain. The tract at residues 607-741 (NAQESSPILG…LVKGVQFDLN (135 aa)) is beta-prism domain.

Belongs to the HlyA hemolysin family. In terms of assembly, monomer. Homoheptamer. After binding to target membranes the protein assembles into a heptameric pre-pore complex. Proteolytic cleavage triggers a conformation change that is required for membrane insertion and pore formation. In terms of processing, proteolytical cleavage is required to convert the 80 kDa hemolysin precursor into the active 65 kDa hemolysin.

The protein localises to the secreted. The protein resides in the host cell membrane. In terms of biological role, bacterial hemolysin that causes cytolysis by forming heptameric pores in target host membranes. The sequence is that of Hemolysin (hlyA) from Vibrio cholerae serotype O1 (strain ATCC 39315 / El Tor Inaba N16961).